A 187-amino-acid chain; its full sequence is Cytochrome b-245 chaperone 1 (187 aa).

Residues Gly-20–Gly-42 traverse the membrane as a helical segment. Ser-168 carries the post-translational modification Phosphoserine.

The protein belongs to the CYBC1 family. Interacts with CYBB; CYBC1 may act as a chaperone stabilizing Cytochrome b-245 heterodimer. As to expression, highly expressed in macrophages, neutrophils and monocytes.

Its subcellular location is the endoplasmic reticulum membrane. Functionally, functions as a chaperone necessary for a stable expression of the CYBA and CYBB subunits of the cytochrome b-245 heterodimer. Controls the phagocyte respiratory burst and is essential for innate immunity. The polypeptide is Cytochrome b-245 chaperone 1 (Homo sapiens (Human)).